The sequence spans 1448 residues: MGARNSVLSGKKADELEKIRLRPGGKKKYMLKHVVWAANELDRFGLAESLLENKEGCQKILSVLAPLVPTGSENLKSLYNTVCVIWCIHAEEKVKHTEEAKQIVQRHLVVETGTAETMPKTSRPTAPSSGRGGNYPVQQIGGNYVHLPLSPRTLNAWVKLIEEKKFGAEVVPGFQALSEGCTPYDINQMLNCVGDHQAAMQIIRDIINEEAADWDLQHPQPAPQQGQLREPSGSDIAGTTSSVDEQIQWMYRQQNPIPVGNIYRRWIQLGLQKCVRMYNPTNILDVKQGPKEPFQSYVDRFYKSLRAEQTDAAVKNWMTQTLLIQNANPDCKLVLKGLGVNPTLEEMLTACQGVGGPGQKARLMAEALKEALAPVPIPFAAAQKRGPRKPIKCWNCGKEGHSARQCRAPRRQGCWKCGKMDHVMAKCPDRQAGFFRPWSMGKEAPQFPHGSSASGADANCSPRGPSCGSAKELHAVGQAAERKQREALQGGDRGFAAPQFSLWRRPVVTAHIEGQPVEVLLDTGADDSIVTGIELGPHYTPKIVGGIGGFINTKEYKNVKIEVLGKRIKGTIMTGDTPINIFGRNLLTALGMSLNLPIAKVEPVKVTLKPGKVGPKLKQWPLSKEKIVALREICEKMEKDGQLEEAPPTNPYNTPTFAIKKKDKNKWRMLIDFRELNRVTQDFTEVQLGIPHPAGLAKRKRITVLDIGDAYFSIPLDEEFRQYTAFTLPSVNNAEPGKRYIYKVLPQGWKGSPAIFQYTMRHVLEPFRKANPDVTLVQYMDDILIASDRTDLEHDRVVLQLKELLNSIGFSTPEEKFQKDPPFQWMGYELWPTKWKLQKIELPQRETWTVNDIQKLVGVLNWAAQIYPGIKTKHLCRLIRGKMTLTEEVQWTEMAEAEYEENKIILSQEQEGCYYQEGKPLEATVIKSQDNQWSYKIHQEDKILKVGKFAKIKNTHTNGVRLLAHVIQKIGKEAIVIWGQVPKFHLPVERDVWEQWWTDYWQVTWIPEWDFISTPPLVRLVFNLVKDPIEGEETYYTDGSCNKQSKEGKAGYITDRGKDKVKVLEQTTNQQAELEAFLMALTDSGPKTNIIVDSQYVMGIITGCPTESESRLVNQIIEEMIKKSEIYVAWVPAHKGIGGNQEIDHLVSQGIRQVLFLEKIEPAQEEHDKYHSNVKELVFKFGLPRIVARQIVDTCDKCHQKGEAIHGQVNSDLGTWQMDCTHLEGKIVIVAVHVASGFIEAEVIPQETGRQTALFLLKLAGRWPITHLHTDNGANFASQEVKMVAWWAGIEHTFGVPYNPQSQGVVEAMNHHLKNQIDRIREQANSVETIVLMAVHCMNFKRRGGIGDMTPAERLINMITTEQEIQFQQSKNSKFKNFRVYYREGRDQLWKGPGELLWKGEGAVILKVGTDIKVVPRRKAKIIKDYGGGKEVDSSSHMEDTGEAREVA.

The N-myristoyl glycine; by host moiety is linked to residue Gly-2. Residues 16-22 (LEKIRLR) carry the Nuclear export signal motif. Positions 26-32 (KKKYMLK) match the Nuclear localization signal motif. 2 disordered regions span residues 114–133 (TAET…GRGG) and 217–239 (QHPQ…IAGT). The segment covering 119 to 128 (PKTSRPTAPS) has biased composition (polar residues). 2 consecutive CCHC-type zinc fingers follow at residues 391-408 (IKCW…QCRA) and 412-429 (QGCW…KCPD). Positions 443-464 (EAPQFPHGSSASGADANCSPRG) are disordered. Residues 517–586 (VEVLLDTGAD…TPINIFGRNL (70 aa)) enclose the Peptidase A2 domain. Asp-522 (for protease activity; shared with dimeric partner) is an active-site residue. The Reverse transcriptase domain occupies 640–830 (DGQLEEAPPT…PPFQWMGYEL (191 aa)). Positions 706, 781, and 782 each coordinate Mg(2+). Residues 823-831 (FQWMGYELW) are RT 'primer grip'. The Tryptophan repeat motif signature appears at 993–1009 (WEQWWTDYWQVTWIPEW). An RNase H type-1 domain is found at 1029-1152 (IEGEETYYTD…IDHLVSQGIR (124 aa)). Mg(2+) is bound by residues Asp-1038 and Glu-1073. An Integrase-type zinc finger spans residues 1158–1199 (EKIEPAQEEHDKYHSNVKELVFKFGLPRIVARQIVDTCDKCH). The Zn(2+) site is built by His-1167, His-1171, Cys-1195, and Cys-1198. Residues 1209 to 1359 (VNSDLGTWQM…TPAERLINMI (151 aa)) enclose the Integrase catalytic domain. Mg(2+) is bound at residue Asp-1219. Positions 1378–1425 (FRVYYREGRDQLWKGPGELLWKGEGAVILKVGTDIKVVPRRKAKIIKD) form a DNA-binding region, integrase-type. Residues 1426-1448 (YGGGKEVDSSSHMEDTGEAREVA) form a disordered region.

As to quaternary structure, homotrimer. Interacts with gp41 (via C-terminus). Homodimer. The active site consists of two apposed aspartic acid residues. In terms of assembly, heterodimer of p66 RT and p51 RT (RT p66/p51). Heterodimerization of RT is essential for DNA polymerase activity. Despite the sequence identities, p66 RT and p51 RT have distinct folding. As to quaternary structure, homotetramer; may further associate as a homohexadecamer. Mg(2+) serves as cofactor. Post-translationally, specific enzymatic cleavages by the viral protease yield mature proteins. The protease is released by autocatalytic cleavage. The polyprotein is cleaved during and after budding, this process is termed maturation. Proteolytic cleavage of p66 RT removes the RNase H domain to yield the p51 RT subunit. In terms of processing, capsid protein p24 is phosphorylated.

It is found in the virion. It localises to the host nucleus. Its subcellular location is the host cytoplasm. The protein localises to the host cell membrane. It catalyses the reaction Specific for a P1 residue that is hydrophobic, and P1' variable, but often Pro.. The catalysed reaction is Endohydrolysis of RNA in RNA/DNA hybrids. Three different cleavage modes: 1. sequence-specific internal cleavage of RNA. Human immunodeficiency virus type 1 and Moloney murine leukemia virus enzymes prefer to cleave the RNA strand one nucleotide away from the RNA-DNA junction. 2. RNA 5'-end directed cleavage 13-19 nucleotides from the RNA end. 3. DNA 3'-end directed cleavage 15-20 nucleotides away from the primer terminus.. The enzyme catalyses 3'-end directed exonucleolytic cleavage of viral RNA-DNA hybrid.. It carries out the reaction DNA(n) + a 2'-deoxyribonucleoside 5'-triphosphate = DNA(n+1) + diphosphate. With respect to regulation, the viral protease is inhibited by many synthetic protease inhibitors (PIs), such as amprenavir, atazanavir, indinavir, loprinavir, nelfinavir, ritonavir and saquinavir. RT can be inhibited either by nucleoside RT inhibitors (NRTIs) or by non nucleoside RT inhibitors (NNRTIs). NRTIs act as chain terminators, whereas NNRTIs inhibit DNA polymerization by binding a small hydrophobic pocket near the RT active site and inducing an allosteric change in this region. Classical NRTIs are abacavir, adefovir (PMEA), didanosine (ddI), lamivudine (3TC), stavudine (d4T), tenofovir (PMPA), zalcitabine (ddC), and zidovudine (AZT). Classical NNRTIs are atevirdine (BHAP U-87201E), delavirdine, efavirenz (DMP-266), emivirine (I-EBU), and nevirapine (BI-RG-587). The tritherapies used as a basic effective treatment of AIDS associate two NRTIs and one NNRTI. Use of protease inhibitors in tritherapy regimens permit more ambitious therapeutic strategies. Gag-Pol polyprotein and Gag polyprotein may regulate their own translation, by the binding genomic RNA in the 5'-UTR. At low concentration, Gag-Pol and Gag would promote translation, whereas at high concentration, the polyproteins encapsidate genomic RNA and then shut off translation. Functionally, matrix protein p17 has two main functions: in infected cell, it targets Gag and Gag-pol polyproteins to the plasma membrane via a multipartite membrane-binding signal, that includes its myristointegration complex. The myristoylation signal and the NLS exert conflicting influences its subcellular localization. The key regulation of these motifs might be phosphorylation of a portion of MA molecules on the C-terminal tyrosine at the time of virus maturation, by virion-associated cellular tyrosine kinase. Implicated in the release from host cell mediated by Vpu. In terms of biological role, capsid protein p24 forms the conical core that encapsulates the genomic RNA-nucleocapsid complex in the virion. The core is constituted by capsid protein hexamer subunits. The core is disassembled soon after virion entry. Interaction with host PPIA/CYPA protects the virus from restriction by host TRIM5-alpha and from an unknown antiviral activity in host cells. This capsid restriction by TRIM5 is one of the factors which restricts SIV to the simian species. Its function is as follows. Nucleocapsid protein p7 encapsulates and protects viral dimeric unspliced (genomic) RNA. Binds these RNAs through its zinc fingers. Facilitates rearangement of nucleic acid secondary structure during retrotranscription of genomic RNA. This capability is referred to as nucleic acid chaperone activity. The aspartyl protease mediates proteolytic cleavages of Gag and Gag-Pol polyproteins during or shortly after the release of the virion from the plasma membrane. Cleavages take place as an ordered, step-wise cascade to yield mature proteins. This process is called maturation. Displays maximal activity during the budding process just prior to particle release from the cell. Also cleaves Nef and Vif, probably concomitantly with viral structural proteins on maturation of virus particles. Hydrolyzes host EIF4GI and PABP1 in order to shut off the capped cellular mRNA translation. The resulting inhibition of cellular protein synthesis serves to ensure maximal viral gene expression and to evade host immune response. Functionally, reverse transcriptase/ribonuclease H (RT) is a multifunctional enzyme that converts the viral dimeric RNA genome into dsDNA in the cytoplasm, shortly after virus entry into the cell. This enzyme displays a DNA polymerase activity that can copy either DNA or RNA templates, and a ribonuclease H (RNase H) activity that cleaves the RNA strand of RNA-DNA heteroduplexes in a partially processive 3' to 5' endonucleasic mode. Conversion of viral genomic RNA into dsDNA requires many steps. A tRNA binds to the primer-binding site (PBS) situated at the 5'-end of the viral RNA. RT uses the 3' end of the tRNA primer to perform a short round of RNA-dependent minus-strand DNA synthesis. The reading proceeds through the U5 region and ends after the repeated (R) region which is present at both ends of viral RNA. The portion of the RNA-DNA heteroduplex is digested by the RNase H, resulting in a ssDNA product attached to the tRNA primer. This ssDNA/tRNA hybridizes with the identical R region situated at the 3' end of viral RNA. This template exchange, known as minus-strand DNA strong stop transfer, can be either intra- or intermolecular. RT uses the 3' end of this newly synthesized short ssDNA to perform the RNA-dependent minus-strand DNA synthesis of the whole template. RNase H digests the RNA template except for two polypurine tracts (PPTs) situated at the 5'-end and near the center of the genome. It is not clear if both polymerase and RNase H activities are simultaneous. RNase H can probably proceed both in a polymerase-dependent (RNA cut into small fragments by the same RT performing DNA synthesis) and a polymerase-independent mode (cleavage of remaining RNA fragments by free RTs). Secondly, RT performs DNA-directed plus-strand DNA synthesis using the PPTs that have not been removed by RNase H as primers. PPTs and tRNA primers are then removed by RNase H. The 3' and 5' ssDNA PBS regions hybridize to form a circular dsDNA intermediate. Strand displacement synthesis by RT to the PBS and PPT ends produces a blunt ended, linear dsDNA copy of the viral genome that includes long terminal repeats (LTRs) at both ends. In terms of biological role, integrase catalyzes viral DNA integration into the host chromosome, by performing a series of DNA cutting and joining reactions. This enzyme activity takes place after virion entry into a cell and reverse transcription of the RNA genome in dsDNA. The first step in the integration process is 3' processing. This step requires a complex comprising the viral genome, matrix protein, Vpr and integrase. This complex is called the pre-integration complex (PIC). The integrase protein removes 2 nucleotides from each 3' end of the viral DNA, leaving recessed CA OH's at the 3' ends. In the second step, the PIC enters cell nucleus. This process is mediated through integrase and Vpr proteins, and allows the virus to infect a non dividing cell. This ability to enter the nucleus is specific of lentiviruses, other retroviruses cannot and rely on cell division to access cell chromosomes. In the third step, termed strand transfer, the integrase protein joins the previously processed 3' ends to the 5' ends of strands of target cellular DNA at the site of integration. The 5'-ends are produced by integrase-catalyzed staggered cuts, 5 bp apart. A Y-shaped, gapped, recombination intermediate results, with the 5'-ends of the viral DNA strands and the 3' ends of target DNA strands remaining unjoined, flanking a gap of 5 bp. The last step is viral DNA integration into host chromosome. This involves host DNA repair synthesis in which the 5 bp gaps between the unjoined strands are filled in and then ligated. Since this process occurs at both cuts flanking the SIV genome, a 5 bp duplication of host DNA is produced at the ends of SIV integration. Alternatively, Integrase may catalyze the excision of viral DNA just after strand transfer, this is termed disintegration. This is Gag-Pol polyprotein (gag-pol) from Simian immunodeficiency virus (isolate Mm251) (SIV-mac).